The primary structure comprises 191 residues: Programmed cell death protein 6 (191 aa).

At Ala2 the chain carries N-acetylalanine. EF-hand domains follow at residues 23 to 58 (PDQS…GTWT), 59 to 89 (PFNP…TGVW), 90 to 125 (KYIT…FGYR), 126 to 161 (LSDQ…LQRL), and 162 to 191 (TDIF…FSIV). The Ca(2+) site is built by Asp36, Asp38, Ser40, Val42, and Glu47. Ca(2+) is bound by residues Asp103, Asp105, Ser107, Met109, and Glu114. Mg(2+)-binding residues include Asp169, Asp171, Asp173, and Trp175.

In terms of assembly, homodimer and heterodimer; heterodimerizes (via the EF-hand 5) with PEF1. Isoform 1 and isoform 2 self-associate; probably forming homodimers. Interacts with CPNE4 (via VWFA domain). Interacts with PDCD6IP; the interaction is calcium-dependent. Interacts with RBM22. Interacts with PLSCR4. Interacts with ANXA7 and TSG101. Interacts with DAPK1. Interacts with SEC31A; the interaction is calcium-dependent and promotes monoubiquitination of SEC31A. Interacts with ANXA11 (via N-terminus); the interaction is calcium-dependent. Interacts with PLSCR3 (via N-terminus); the interaction is calcium-dependent. Interacts with MCOLN1; the interaction is calcium-dependent. Interacts with KDR; the interaction is calcium-dependent. Interacts with HEBP2; the interaction is calcium-dependent. Interacts with TFG. Isoform 1: Interacts with SHISA5, leading to stabilize it. Isoform 2: Does not interact with SHISA5. Isoform 2: Does not interact with PDCD6IP, TSG101, ANXA7 and ANXA11.

The protein localises to the endoplasmic reticulum membrane. Its subcellular location is the cytoplasmic vesicle. It is found in the COPII-coated vesicle membrane. The protein resides in the cytoplasm. It localises to the nucleus. The protein localises to the endosome. Calcium sensor that plays a key role in processes such as endoplasmic reticulum (ER)-Golgi vesicular transport, endosomal biogenesis or membrane repair. Acts as an adapter that bridges unrelated proteins or stabilizes weak protein-protein complexes in response to calcium: calcium-binding triggers exposure of apolar surface, promoting interaction with different sets of proteins thanks to 3 different hydrophobic pockets, leading to translocation to membranes. Involved in ER-Golgi transport. Regulates ER-Golgi transport by promoting the association between PDCD6IP and TSG101, thereby bridging together the ESCRT-III and ESCRT-I complexes. Together with PEF1, acts as a calcium-dependent adapter for the BCR(KLHL12) complex, a complex involved in ER-Golgi transport by regulating the size of COPII coats. In response to cytosolic calcium increase, the heterodimer formed with PEF1 interacts with, and bridges together the BCR(KLHL12) complex and SEC31 (SEC31A or SEC31B), promoting monoubiquitination of SEC31 and subsequent collagen export, which is required for neural crest specification. Involved in the regulation of the distribution and function of MCOLN1 in the endosomal pathway. Promotes localization and polymerization of TFG at endoplasmic reticulum exit site. Required for T-cell receptor-, Fas-, and glucocorticoid-induced apoptosis. May mediate Ca(2+)-regulated signals along the death pathway: interaction with DAPK1 can accelerate apoptotic cell death by increasing caspase-3 activity. Its role in apoptosis may however be indirect, as suggested by knockout experiments. May inhibit KDR/VEGFR2-dependent angiogenesis; the function involves inhibition of VEGF-induced phosphorylation of the Akt signaling pathway. In terms of biological role, has a lower Ca(2+) affinity than isoform 1. The polypeptide is Programmed cell death protein 6 (Rattus norvegicus (Rat)).